Here is a 269-residue protein sequence, read N- to C-terminus: Ribonuclease HII (269 aa).

Residues 83-269 (YLIAGVDEVG…HRMSFLTNIL (187 aa)) form the RNase H type-2 domain. Asp-89, Glu-90, and Asp-185 together coordinate a divalent metal cation.

Belongs to the RNase HII family. Mn(2+) serves as cofactor. Requires Mg(2+) as cofactor.

The protein resides in the cytoplasm. It catalyses the reaction Endonucleolytic cleavage to 5'-phosphomonoester.. In terms of biological role, endonuclease that specifically degrades the RNA of RNA-DNA hybrids. The sequence is that of Ribonuclease HII from Clostridium botulinum (strain Hall / ATCC 3502 / NCTC 13319 / Type A).